Reading from the N-terminus, the 693-residue chain is MATDLSSSSTLLLSRNCKTPPFYHTTNSLSLSKTHHLYASRNAVVSRLRLLCQTTGSTQSTPTSGVSDLQFAAQVGQHRLSKVPISNIRNFCIIAHIDHGKSTLADKLLQVTGTVQQREMKEQFLDNMDLERERGITIKLQAARMRYVYENKPYCLNLIDTPGHVDFSYEVSRSLAACEGALLVVDASQGVEAQTLANVYLALENNLEIIPVLNKIDLPGSEPDRVIQEIEEVIGLDCSNAIRCSAKEGIGIIDILNAIVERIPSPRNTAEMPLRTLIFDSYYDPYRGVIVYFRVLDGSIKKGDRIYFMASKKDYFADEIGVLSPNQMQVEELYAGEVGYLSASIRSVADARVGDTITHYNRRAQSSLPGYKEATPMVFCGLFPVDADQFPEVRDALEKLQLNDAALKFEPETSSAMGFGFRCGFLGLLHMEIVQERLEREYNLSLITTAPSVVYRVNCVDGDTVECSNPSLLPEPGKRRSIEEPLVKIEMLTPKDYIGPLMELAQDRRGEFKEMRFITNSRASITYELPLAEMVGDFFDQLKSRSKGYASMEYTFIGYKESDLIKLEIQINGDPVEPLATIVHKDKAYPVGRALTQKLKELIPRQMFKVPIQACIGSKVIASEALPAIRKDVLAKCYGGDISRKKKLLKKQAEGKKRMKAIGKVDVPQEAFMAVLKLEKKPWSYKYKMSVNC.

The transit peptide at 1–51 directs the protein to the chloroplast; that stretch reads MATDLSSSSTLLLSRNCKTPPFYHTTNSLSLSKTHHLYASRNAVVSRLRLL. A tr-type G domain is found at 86 to 267; it reads SNIRNFCIIA…AIVERIPSPR (182 aa). GTP is bound by residues 95–102, 160–164, and 214–217; these read AHIDHGKS, DTPGH, and NKID.

Belongs to the TRAFAC class translation factor GTPase superfamily. Classic translation factor GTPase family. LepA subfamily.

It is found in the plastid. It localises to the chloroplast. It catalyses the reaction GTP + H2O = GDP + phosphate + H(+). Its function is as follows. Promotes chloroplast protein synthesis. May act as a fidelity factor of the translation reaction, by catalyzing a one-codon backward translocation of tRNAs on improperly translocated ribosomes. This is Translation factor GUF1 homolog, chloroplastic from Ricinus communis (Castor bean).